A 430-amino-acid chain; its full sequence is UDP-N-acetylmuramoylalanine--D-glutamate ligase (430 aa).

An ATP-binding site is contributed by 109–115; that stretch reads GTDGKST.

Belongs to the MurCDEF family.

It is found in the cytoplasm. The enzyme catalyses UDP-N-acetyl-alpha-D-muramoyl-L-alanine + D-glutamate + ATP = UDP-N-acetyl-alpha-D-muramoyl-L-alanyl-D-glutamate + ADP + phosphate + H(+). Its pathway is cell wall biogenesis; peptidoglycan biosynthesis. Its function is as follows. Cell wall formation. Catalyzes the addition of glutamate to the nucleotide precursor UDP-N-acetylmuramoyl-L-alanine (UMA). The polypeptide is UDP-N-acetylmuramoylalanine--D-glutamate ligase (Thermotoga petrophila (strain ATCC BAA-488 / DSM 13995 / JCM 10881 / RKU-1)).